The chain runs to 130 residues: MKRIVTFVLLIFCALPVLCSQTSAPPKRHISCRFTQIWNIPSCYNKQSDLSEAWLYAIISVMVFCSTIFALAIYPYLDIGWNAIDAMNHPTFPAPNVIPLQQVIAPINQPRPPSPTPTEISYFNLTGGDD.

A signal peptide spans 1-19; it reads MKRIVTFVLLIFCALPVLC. The helical transmembrane segment at 53–77 threads the bilayer; sequence AWLYAIISVMVFCSTIFALAIYPYL.

It belongs to the adenoviridae E3_14 family. Phosphorylated on serine; O-glycosylated, but not N-glycosylated.

Its subcellular location is the host membrane. In terms of biological role, down-regulates the EGF receptor and prevents cytolysis by TNF. The sequence is that of Early E3B 14.5 kDa protein from Human adenovirus C serotype 6 (HAdV-6).